The following is a 162-amino-acid chain: NADH-quinone oxidoreductase subunit I (162 aa).

4Fe-4S ferredoxin-type domains lie at 53-83 and 93-122; these read LRRY…IDSA and TRYD…ETHI. Positions 63, 66, 69, 73, 102, 105, 108, and 112 each coordinate [4Fe-4S] cluster.

It belongs to the complex I 23 kDa subunit family. NDH-1 is composed of 14 different subunits. Subunits NuoA, H, J, K, L, M, N constitute the membrane sector of the complex. The cofactor is [4Fe-4S] cluster.

The protein localises to the cell inner membrane. It catalyses the reaction a quinone + NADH + 5 H(+)(in) = a quinol + NAD(+) + 4 H(+)(out). Functionally, NDH-1 shuttles electrons from NADH, via FMN and iron-sulfur (Fe-S) centers, to quinones in the respiratory chain. The immediate electron acceptor for the enzyme in this species is believed to be ubiquinone. Couples the redox reaction to proton translocation (for every two electrons transferred, four hydrogen ions are translocated across the cytoplasmic membrane), and thus conserves the redox energy in a proton gradient. In Xanthomonas oryzae pv. oryzae (strain MAFF 311018), this protein is NADH-quinone oxidoreductase subunit I.